The primary structure comprises 205 residues: Molybdenum cofactor guanylyltransferase (205 aa).

GTP contacts are provided by residues 14 to 16 (LAG), K27, D77, and D107. Residue D107 coordinates Mg(2+).

Belongs to the MobA family. Monomer. Mg(2+) is required as a cofactor.

It localises to the cytoplasm. The catalysed reaction is Mo-molybdopterin + GTP + H(+) = Mo-molybdopterin guanine dinucleotide + diphosphate. Transfers a GMP moiety from GTP to Mo-molybdopterin (Mo-MPT) cofactor (Moco or molybdenum cofactor) to form Mo-molybdopterin guanine dinucleotide (Mo-MGD) cofactor. This Burkholderia cenocepacia (strain HI2424) protein is Molybdenum cofactor guanylyltransferase.